Consider the following 60-residue polypeptide: UPF0434 protein KPN78578_09190 (60 aa).

This sequence belongs to the UPF0434 family.

The chain is UPF0434 protein KPN78578_09190 from Klebsiella pneumoniae subsp. pneumoniae (strain ATCC 700721 / MGH 78578).